We begin with the raw amino-acid sequence, 342 residues long: Dihydroorotase (342 aa).

Zn(2+) contacts are provided by His-13 and His-15. Residues 15 to 17 (HLR) and Asn-41 each bind substrate. Zn(2+) is bound by residues Lys-97, His-134, and His-172. At Lys-97 the chain carries N6-carboxylysine. A substrate-binding site is contributed by His-134. Position 217 (Leu-217) interacts with substrate. A Zn(2+)-binding site is contributed by Asp-245. Asp-245 is a catalytic residue. His-249 and Ala-261 together coordinate substrate.

The protein belongs to the metallo-dependent hydrolases superfamily. DHOase family. Class II DHOase subfamily. As to quaternary structure, homodimer. It depends on Zn(2+) as a cofactor.

The enzyme catalyses (S)-dihydroorotate + H2O = N-carbamoyl-L-aspartate + H(+). It functions in the pathway pyrimidine metabolism; UMP biosynthesis via de novo pathway; (S)-dihydroorotate from bicarbonate: step 3/3. In terms of biological role, catalyzes the reversible cyclization of carbamoyl aspartate to dihydroorotate. This Shewanella loihica (strain ATCC BAA-1088 / PV-4) protein is Dihydroorotase.